A 445-amino-acid polypeptide reads, in one-letter code: Putative MgpC-like protein MPN_464 (445 aa).

Positions Ser-23–Asn-44 are disordered. Over residues Ser-31–Asp-43 the composition is skewed to low complexity.

The protein belongs to the MgpC family.

The polypeptide is Putative MgpC-like protein MPN_464 (Mycoplasma pneumoniae (strain ATCC 29342 / M129 / Subtype 1) (Mycoplasmoides pneumoniae)).